The chain runs to 287 residues: Hydroxysteroid 11-beta-dehydrogenase 1-like protein (287 aa).

A signal peptide spans 1–22 (MKLYAKLLLCSICVAFIAVRWS). Residues 40–66 (GAST…TARR), 91–92 (DM), and 118–120 (NHI) each bind NADP(+). Ser169 lines the substrate pocket. The Proton acceptor role is filled by Tyr182. NADP(+) contacts are provided by residues 182–186 (YASTK) and 215–221 (GLIDTDS).

The protein belongs to the short-chain dehydrogenases/reductases (SDR) family.

It localises to the secreted. It carries out the reaction cortisone + NADPH + H(+) = cortisol + NADP(+). Its function is as follows. Unidirectional NADP(+)-dependent cortisol dehydrogenase (in vitro). The chain is Hydroxysteroid 11-beta-dehydrogenase 1-like protein (hsd11b1l) from Danio rerio (Zebrafish).